Here is a 797-residue protein sequence, read N- to C-terminus: Ubiquitin carboxyl-terminal hydrolase 14 (797 aa).

The UBP-type; degenerate zinc finger occupies 156-266 (LISEHALTLQ…EHLAHFGIDF (111 aa)). Zn(2+)-binding residues include cysteine 180, cysteine 183, cysteine 200, and histidine 213. Residues 308–796 (TGLVNLGNSC…MGYVYFFQRL (489 aa)) enclose the USP domain. The Nucleophile role is filled by cysteine 317. 2 UBA domains span residues 613 to 654 (VANE…LLSH) and 670 to 710 (DIDQ…VFNN). The active-site Proton acceptor is histidine 758.

Belongs to the peptidase C19 family. As to expression, constitutively and ubiquitously expressed (at protein level).

The enzyme catalyses Thiol-dependent hydrolysis of ester, thioester, amide, peptide and isopeptide bonds formed by the C-terminal Gly of ubiquitin (a 76-residue protein attached to proteins as an intracellular targeting signal).. In terms of biological role, recognizes and hydrolyzes the peptide bond at the C-terminal Gly of ubiquitin. Involved in the processing of poly-ubiquitin precursors as well as that of ubiquitinated proteins. Involved in seed and embryo development. This is Ubiquitin carboxyl-terminal hydrolase 14 (UBP14) from Arabidopsis thaliana (Mouse-ear cress).